A 309-amino-acid polypeptide reads, in one-letter code: N(5)-(carboxyethyl)ornithine synthase (309 aa).

Positions 15, 71, and 92 each coordinate pyruvate. Position 171–176 (171–176 (GSGNVA)) interacts with NADP(+).

This sequence belongs to the AlaDH/PNT family. CEOS subfamily. Homotetramer.

It catalyses the reaction N(5)-[1(S)-1-carboxyethyl]-L-ornithine + NADP(+) + H2O = L-ornithine + pyruvate + NADPH + H(+). Catalyzes the NADPH-dependent reductive condensation between pyruvic acid and the side chain amino group of L-ornithine to form N(5)-(L-1-carboxyethyl)-L-ornithine. To a lesser extent, can also use L-lysine as substrate (yielding N(6)-(L-1-carboxyethyl)-L-lysine). The chain is N(5)-(carboxyethyl)ornithine synthase (ceo) from Lactococcus lactis subsp. lactis (strain IL1403) (Streptococcus lactis).